We begin with the raw amino-acid sequence, 209 residues long: Transcription factor atf31 (209 aa).

Over residues 90–103 the composition is skewed to polar residues; that stretch reads SKSPSIISEASHNS. The segment at 90 to 133 is disordered; it reads SKSPSIISEASHNSPSRELDDSGDENTSKLTGTKQSMLKARNRQ. The region spanning 121 to 184 is the bZIP domain; it reads GTKQSMLKAR…IKLRTLVFAH (64 aa). The tract at residues 123–161 is basic motif; it reads KQSMLKARNRQAAQKCRIKKKKYLQTLQDQVNYYTSENK. The tract at residues 163–177 is leucine-zipper; it reads LLQSANDLREEIIKL.

It belongs to the bZIP family.

The protein resides in the nucleus. This chain is Transcription factor atf31 (atf31), found in Schizosaccharomyces pombe (strain 972 / ATCC 24843) (Fission yeast).